Consider the following 107-residue polypeptide: Iron-binding protein IscA (107 aa).

Fe cation is bound by residues Cys-35, Cys-99, and Cys-101.

The protein belongs to the HesB/IscA family. As to quaternary structure, homodimer; may form tetramers and higher multimers. Fe cation is required as a cofactor.

Is able to transfer iron-sulfur clusters to apo-ferredoxin. Multiple cycles of [2Fe2S] cluster formation and transfer are observed, suggesting that IscA acts catalytically. Recruits intracellular free iron so as to provide iron for the assembly of transient iron-sulfur cluster in IscU in the presence of IscS, L-cysteine and the thioredoxin reductase system TrxA/TrxB. The polypeptide is Iron-binding protein IscA (Photorhabdus laumondii subsp. laumondii (strain DSM 15139 / CIP 105565 / TT01) (Photorhabdus luminescens subsp. laumondii)).